Here is a 338-residue protein sequence, read N- to C-terminus: Inositol 2-dehydrogenase (338 aa).

It belongs to the Gfo/Idh/MocA family. In terms of assembly, homotetramer.

It catalyses the reaction myo-inositol + NAD(+) = scyllo-inosose + NADH + H(+). In terms of biological role, involved in the oxidation of myo-inositol (MI) to 2-keto-myo-inositol (2KMI or 2-inosose). The polypeptide is Inositol 2-dehydrogenase (Azotobacter vinelandii (strain DJ / ATCC BAA-1303)).